The chain runs to 312 residues: MDLTSMAMQETTAAAEEDRLPCSEVPVKEKTKKITWVRKWNSTDVFHILFIGGLHVLCLFAPSTFSWKSFWVCFALYAICGVFGTTLSFHRNLTHRSFKLPKYLEYFFAYVGLHALQGDPVWWVSTHRYHHKYTDTYLDPHSPIEGFWFCHIFWLFDSKYIIEKCGRYENAGDLMKQSYYRFLERTFVYHVYLQAALLYLFGGFPFIVWGMAVRTILGFHLSWLVNSVCHRWGNRPWNTGDLSTNNWFIAMLTSGEGWHNNHHAFEYSARHGIEWWQIDTTWYIIKLLEYLGLATDIKVPSEIHKRKMSFKN.

2 helical membrane passes run 45–65 (VFHI…PSTF) and 69–89 (SFWV…TLSF). Fe cation contacts are provided by His-90, His-95, His-127, His-130, and His-131. The Histidine box-1 motif lies at 90-95 (HRNLTH). Residues 127-131 (HRYHH) carry the Histidine box-2 motif. A helical membrane pass occupies residues 193–213 (LQAALLYLFGGFPFIVWGMAV). Residues His-230, His-259, His-262, and His-263 each coordinate Fe cation. The Histidine box-3 motif lies at 259-263 (HNNHH).

It belongs to the fatty acid desaturase type 1 family. Requires Fe(2+) as cofactor.

It is found in the membrane. It catalyses the reaction (11Z,14Z)-eicosadienoyl-CoA + AH2 + O2 = (5Z,11Z,14Z)-eicosatrienoyl-CoA + A + 2 H2O. The catalysed reaction is (11Z,14Z,17Z)-eicosatrienoyl-CoA + AH2 + O2 = (5Z,11Z,14Z,17Z)-eicosatetraenoyl-CoA + A + 2 H2O. The protein operates within lipid metabolism; polyunsaturated fatty acid biosynthesis. Its function is as follows. Catalyzes the desaturation of 20:2Delta(11,14) and 20:3Delta(11,14,17) to generate sciadonic acid (20:3Delta(5,11,14)) and juniperonic acid (20:4Delta(5,11,14,17)). The chain is Acyl-CoA C20 Delta5-desaturase from Anemone leveillei (Windflower).